We begin with the raw amino-acid sequence, 567 residues long: 2-isopropylmalate synthase (567 aa).

One can recognise a Pyruvate carboxyltransferase domain in the interval 28-302 (PQWCSVDLRD…NPELDFSDIN (275 aa)). Mg(2+) contacts are provided by aspartate 37, histidine 241, histidine 243, and asparagine 277. The interval 435–567 (IRTPLQLNYH…DMDTQEEDIA (133 aa)) is regulatory domain.

The protein belongs to the alpha-IPM synthase/homocitrate synthase family. LeuA type 2 subfamily. In terms of assembly, homodimer. It depends on Mg(2+) as a cofactor.

It is found in the cytoplasm. It carries out the reaction 3-methyl-2-oxobutanoate + acetyl-CoA + H2O = (2S)-2-isopropylmalate + CoA + H(+). It functions in the pathway amino-acid biosynthesis; L-leucine biosynthesis; L-leucine from 3-methyl-2-oxobutanoate: step 1/4. Its function is as follows. Catalyzes the condensation of the acetyl group of acetyl-CoA with 3-methyl-2-oxobutanoate (2-ketoisovalerate) to form 3-carboxy-3-hydroxy-4-methylpentanoate (2-isopropylmalate). This Acetoanaerobium sticklandii (strain ATCC 12662 / DSM 519 / JCM 1433 / CCUG 9281 / NCIMB 10654 / HF) (Clostridium sticklandii) protein is 2-isopropylmalate synthase.